The following is a 127-amino-acid chain: Calcitonin receptor-stimulating peptide 1 (127 aa).

The signal sequence occupies residues 1–25; sequence MGFWKFSPFLVLGILALYQVGFLQA. The propeptide occupies 26–79; the sequence is APFRSALENPPDSGVRNEEELRLLLAAVMKDYMQMKTHELEQEQETEGSRVAVQ. The cysteines at positions 83 and 88 are disulfide-linked.

Belongs to the calcitonin family.

Its subcellular location is the secreted. Stimulates cAMP production in porcine kidney cell line LLC-PK1 via the calcitonin receptor (CT) but not via the CT-like (CL) receptor. The chain is Calcitonin receptor-stimulating peptide 1 (CRSP1) from Canis lupus familiaris (Dog).